Here is a 376-residue protein sequence, read N- to C-terminus: Aminomethyltransferase (376 aa).

This sequence belongs to the GcvT family. The glycine cleavage system is composed of four proteins: P, T, L and H.

It catalyses the reaction N(6)-[(R)-S(8)-aminomethyldihydrolipoyl]-L-lysyl-[protein] + (6S)-5,6,7,8-tetrahydrofolate = N(6)-[(R)-dihydrolipoyl]-L-lysyl-[protein] + (6R)-5,10-methylene-5,6,7,8-tetrahydrofolate + NH4(+). In terms of biological role, the glycine cleavage system catalyzes the degradation of glycine. The sequence is that of Aminomethyltransferase from Nostoc sp. (strain PCC 7120 / SAG 25.82 / UTEX 2576).